A 210-amino-acid polypeptide reads, in one-letter code: MDDPSGFEERFVHRFYDENSREFSATRRRHWGMTRRFLDNYYTRESIVLDAGCGNGRSFLVPCMVGMDYCLGLLNDARAAGGQGLVRGDVLELPFVDCSFDLVLSVAVIHHLSTRCRRERAMKEMRRVLKDGGKMLLYVWGSSAKSKRKFSRAAGGSEQDYLATWNLRSDTKRYYHLYGMEGLLELCTDSGFKVLDHGTEEESLFAVLEK.

It belongs to the methyltransferase superfamily.

This is Putative methyltransferase ECU09_1500 from Encephalitozoon cuniculi (strain GB-M1) (Microsporidian parasite).